The sequence spans 229 residues: UPF0758 protein MA_1979 (229 aa).

Positions 106–228 (KICSPKDVYA…YVSLKDEGFV (123 aa)) constitute an MPN domain. Residues His177, His179, and Asp190 each coordinate Zn(2+). Positions 177–190 (HNHPSGDPSPSRED) match the JAMM motif motif.

This sequence belongs to the UPF0758 family.

In Methanosarcina acetivorans (strain ATCC 35395 / DSM 2834 / JCM 12185 / C2A), this protein is UPF0758 protein MA_1979.